Here is a 983-residue protein sequence, read N- to C-terminus: Type IV secretion system protein CagE (983 aa).

597–604 is a binding site for ATP; sequence GSTGSGKT.

The protein belongs to the TrbE/VirB4 family. As to quaternary structure, component of the Cag type IV secretion system, which is composed of a wheel-shaped outer membrane complex (OMC) and an inner membrane complex (IMC). Interacts with CagV and CagBeta.

Its subcellular location is the cell inner membrane. The catalysed reaction is ATP + H2O + cellular proteinSide 1 = ADP + phosphate + cellular proteinSide 2.. ATPase component of the type IV secretion system Cag (Cag-T4SS). Acts as a molecular motor to provide the energy that is required for the export of proteins. Required for CagA translocation and induction of IL-8 in host gastric epithelial cells. Plays a key role in Cag-T4SS pilus biogenesis, especially in the localization and stabilization of the pilus-associated components CagI, CagL and the surface protein CagH. Is also critical for assembly of the entire cytoplasmic portion of the Cag inner membrane complex (IMC). The sequence is that of Type IV secretion system protein CagE from Helicobacter pylori (strain ATCC 700392 / 26695) (Campylobacter pylori).